The primary structure comprises 347 residues: Phosphoribosylformylglycinamidine cyclo-ligase (347 aa).

It belongs to the AIR synthase family.

Its subcellular location is the cytoplasm. It catalyses the reaction 2-formamido-N(1)-(5-O-phospho-beta-D-ribosyl)acetamidine + ATP = 5-amino-1-(5-phospho-beta-D-ribosyl)imidazole + ADP + phosphate + H(+). The protein operates within purine metabolism; IMP biosynthesis via de novo pathway; 5-amino-1-(5-phospho-D-ribosyl)imidazole from N(2)-formyl-N(1)-(5-phospho-D-ribosyl)glycinamide: step 2/2. This Hydrogenovibrio crunogenus (strain DSM 25203 / XCL-2) (Thiomicrospira crunogena) protein is Phosphoribosylformylglycinamidine cyclo-ligase.